The sequence spans 106 residues: Large ribosomal subunit protein bL21 (106 aa).

This sequence belongs to the bacterial ribosomal protein bL21 family. In terms of assembly, part of the 50S ribosomal subunit. Contacts protein L20.

This protein binds to 23S rRNA in the presence of protein L20. The protein is Large ribosomal subunit protein bL21 of Xanthomonas euvesicatoria pv. vesicatoria (strain 85-10) (Xanthomonas campestris pv. vesicatoria).